A 163-amino-acid polypeptide reads, in one-letter code: uncharacterized protein (163 aa).

The tract at residues 1-54 (MGKSARLRRSQTSSPENVLLGKDSSDDPYRSDSETESNSSSGTESNMSSDSTTS) is disordered. A compositionally biased stretch (basic and acidic residues) spans 23–33 (DSSDDPYRSDS). The span at 36 to 52 (ESNSSSGTESNMSSDST) shows a compositional bias: low complexity. Residues 69–143 (LRTELAEMEM…VEELESSTRE (75 aa)) adopt a coiled-coil conformation.

This is an uncharacterized protein from Arabidopsis thaliana (Mouse-ear cress).